The chain runs to 286 residues: uncharacterized protein (286 aa).

The disordered stretch occupies residues Y152–T182. Residues V198–E218 traverse the membrane as a helical segment. The interval R239–I278 is disordered. Residues Q247–T257 are compositionally biased toward polar residues.

It localises to the membrane. This is an uncharacterized protein from Bos taurus (Bovine).